The following is a 317-amino-acid chain: Osteopontin (317 aa).

Residues 1–16 (MRLAVVCFCLFGLASC) form the signal peptide. Phosphoserine is present on residues Ser-26, Ser-27, Ser-60, Ser-62, and Ser-63. The disordered stretch occupies residues 43–297 (WLKPDPSQKQ…LVLDPKSKED (255 aa)). Polar residues predominate over residues 49-63 (SQKQNLLAPQNSVSS). Phosphothreonine is present on Thr-66. Phosphoserine occurs at positions 76, 78, 81, 106, 109, 112, 115, and 118. The segment covering 86–110 (DDDDDDDDDGDHAESEDSVNSDESD) has biased composition (acidic residues). Residues Thr-123, Thr-132, and Thr-137 are each glycosylated (O-linked (GalNAc...) threonine). A Cell attachment site motif is present at residues 144 to 146 (RGD). Phosphothreonine is present on residues Thr-170 and Thr-175. A compositionally biased stretch (basic and acidic residues) spans 174 to 187 (LTSRMKSQESDEAI). Phosphoserine is present on residues Ser-176, Ser-180, Ser-200, Ser-204, Ser-209, Ser-213, and Ser-219. The span at 197-216 (SVPSDQDSNGKTSHESSQLD) shows a compositional bias: polar residues. Ser-219 is a glycosylation site (O-linked (Xyl...) (chondroitin sulfate) serine). A Phosphothreonine modification is found at Thr-222. Composition is skewed to basic and acidic residues over residues 223–240 (HSLE…HEST) and 248–263 (SAEK…RSDA). Phosphoserine is present on residues Ser-224, Ser-228, Ser-257, Ser-261, Ser-266, Ser-270, Ser-273, Ser-278, Ser-283, Ser-294, Ser-306, Ser-311, Ser-313, and Ser-314. Residues 273–297 (SLEHQSHEFHSHEDKLVLDPKSKED) are compositionally biased toward basic and acidic residues. An O-linked (Xyl...) (chondroitin sulfate) serine glycan is attached at Ser-311.

Belongs to the osteopontin family. Interacts (via N-terminus) with integrin ITGA9:ITGB1. Post-translationally, extensively phosphorylated by FAM20C in the extracellular medium at multiple sites within the S-x-E/pS motif. The phosphorylated form inhibits hydroxyapatite crystallization. Dephosphorylation via a mechanism involving ALPL/TNAP promotes hydroxyapatite crystallization. In terms of processing, O-glycosylated. Forms covalent cross-links mediated by transglutaminase TGM2, between a glutamine and the epsilon-amino group of a lysine residue, forming homopolymers and heteropolymers, increasing its collagen binding properties.

It localises to the secreted. In terms of biological role, major non-collagenous bone protein that binds tightly to hydroxyapatite. Appears to form an integral part of the mineralized matrix. Probably important to cell-matrix interaction. Acts as a cytokine involved in enhancing production of interferon-gamma and interleukin-12 and reducing production of interleukin-10 and is essential in the pathway that leads to type I immunity. This Rattus norvegicus (Rat) protein is Osteopontin (Spp1).